The sequence spans 314 residues: Porphobilinogen deaminase (314 aa).

An S-(dipyrrolylmethanemethyl)cysteine modification is found at cysteine 249.

The protein belongs to the HMBS family. Monomer. Requires dipyrromethane as cofactor.

It catalyses the reaction 4 porphobilinogen + H2O = hydroxymethylbilane + 4 NH4(+). The protein operates within porphyrin-containing compound metabolism; protoporphyrin-IX biosynthesis; coproporphyrinogen-III from 5-aminolevulinate: step 2/4. Its function is as follows. Tetrapolymerization of the monopyrrole PBG into the hydroxymethylbilane pre-uroporphyrinogen in several discrete steps. The polypeptide is Porphobilinogen deaminase (Brucella anthropi (strain ATCC 49188 / DSM 6882 / CCUG 24695 / JCM 21032 / LMG 3331 / NBRC 15819 / NCTC 12168 / Alc 37) (Ochrobactrum anthropi)).